A 270-amino-acid chain; its full sequence is Cbp/p300-interacting transactivator 2 (270 aa).

The tract at residues 138 to 201 (LHPAAGHQMN…SGGGSGSGNM (64 aa)) is disordered. Gly residues predominate over residues 165–198 (STPGGSGGSSTPGGSGSSSGGGAGSSNSGGGSGS).

Belongs to the CITED family. In terms of assembly, interacts (via C-terminus) with SMAD2. Interacts (via C-terminus) with SMAD3 (via MH2 domain). Interacts with LHX2 (via LIM domains). Interacts with WT1. Interacts (via C-terminus) with EP300 (via CH1 domain); the interaction is stimulated in response to hypoxia. Interacts with PPARA. Interacts (via C-terminus) with TFAP2A, TFAP2B and TFAP2C.

It is found in the nucleus. Functionally, transcriptional coactivator of the p300/CBP-mediated transcription complex. Acts as a bridge, linking TFAP2 transcription factors and the p300/CBP transcriptional coactivator complex in order to stimulate TFAP2-mediated transcriptional activation. Positively regulates TGF-beta signaling through its association with the SMAD/p300/CBP-mediated transcriptional coactivator complex. Stimulates the peroxisome proliferator-activated receptors PPARA transcriptional activity. Enhances estrogen-dependent transactivation mediated by estrogen receptors. Also acts as a transcriptional corepressor; interferes with the binding of the transcription factors HIF1A or STAT2 and the p300/CBP transcriptional coactivator complex. Participates in sex determination and early gonad development by stimulating transcription activation of SRY. Plays a role in controlling left-right patterning during embryogenesis; potentiates transcriptional activation of NODAL-mediated gene transcription in the left lateral plate mesoderm (LPM). Plays an essential role in differentiation of the adrenal cortex from the adrenogonadal primordium (AGP); stimulates WT1-mediated transcription activation thereby up-regulating the nuclear hormone receptor NR5A1 promoter activity. Associates with chromatin to the PITX2 P1 promoter region. The sequence is that of Cbp/p300-interacting transactivator 2 (CITED2) from Homo sapiens (Human).